Here is a 235-residue protein sequence, read N- to C-terminus: MAFQELCCSNLLKFENCSLLETHKKISIEGNISAGKSTLINILSDNGYNVVQEPLEQWRGNNLLDKLYKDPSRWAYTFQSHAFWTRTKTYIDALNKNKGNIILERSVFSDKYIFATALHDIGYIDDTEWNIYNEYSKWMTEFMDIKIDGIIYLKTSPDICYKRMLNRARHEENTVKIDYLNLLHDKHEKWLSENNEHEFKVPVLEINGDGDFIDDSNRQSSILSNIYDFISELYI.

30 to 38 (GNISAGKST) is an ATP binding site. The substrate site is built by glutamate 53, tyrosine 68, and glutamine 79. Glutamate 104 (proton acceptor) is an active-site residue. Positions 105, 110, and 172 each coordinate substrate.

It belongs to the DCK/DGK family.

The catalysed reaction is 2'-deoxycytidine + a ribonucleoside 5'-triphosphate = dCMP + a ribonucleoside 5'-diphosphate + H(+). In Vertebrata (FPV), this protein is Probable deoxycytidine kinase FPV151.